Reading from the N-terminus, the 451-residue chain is Phenylalanine--tRNA ligase, mitochondrial (451 aa).

Substrate contacts are provided by residues Ser-157–Gln-160, Arg-179, Gln-186–Tyr-188, and Gln-193–Glu-195. Position 202 is an N6-acetyllysine (Lys-202). Residues Glu-287 and Phe-312 each coordinate substrate. The region spanning Ser-358 to Arg-450 is the FDX-ACB domain.

The protein belongs to the class-II aminoacyl-tRNA synthetase family. Monomer.

It is found in the mitochondrion matrix. The protein resides in the mitochondrion. It carries out the reaction tRNA(Phe) + L-phenylalanine + ATP = L-phenylalanyl-tRNA(Phe) + AMP + diphosphate + H(+). Its function is as follows. Is responsible for the charging of tRNA(Phe) with phenylalanine in mitochondrial translation. To a lesser extent, also catalyzes direct attachment of m-Tyr (an oxidized version of Phe) to tRNA(Phe), thereby opening the way for delivery of the misacylated tRNA to the ribosome and incorporation of ROS-damaged amino acid into proteins. The chain is Phenylalanine--tRNA ligase, mitochondrial (FARS2) from Homo sapiens (Human).